The chain runs to 195 residues: uncharacterized protein (195 aa).

This is an uncharacterized protein from Schizosaccharomyces pombe (strain 972 / ATCC 24843) (Fission yeast).